Here is a 428-residue protein sequence, read N- to C-terminus: Adenosylhomocysteinase (428 aa).

Positions 62, 134, and 159 each coordinate substrate. 160–162 (TTT) serves as a coordination point for NAD(+). Substrate contacts are provided by Lys189 and Asp193. Residues Asn194, 223–228 (GYGWCG), Glu246, Asn281, 302–304 (SGH), and Asn349 each bind NAD(+).

This sequence belongs to the adenosylhomocysteinase family. NAD(+) serves as cofactor.

The protein localises to the cytoplasm. It catalyses the reaction S-adenosyl-L-homocysteine + H2O = L-homocysteine + adenosine. It functions in the pathway amino-acid biosynthesis; L-homocysteine biosynthesis; L-homocysteine from S-adenosyl-L-homocysteine: step 1/1. Functionally, may play a key role in the regulation of the intracellular concentration of adenosylhomocysteine. This is Adenosylhomocysteinase from Gloeobacter violaceus (strain ATCC 29082 / PCC 7421).